The chain runs to 472 residues: uncharacterized protein (472 aa).

The protein belongs to the AllG family.

This is an uncharacterized protein from Escherichia coli (strain K12).